Here is a 97-residue protein sequence, read N- to C-terminus: YcgL domain-containing protein PP_4590 (97 aa).

In terms of domain architecture, YcgL spans Arg-3–Pro-87.

The protein is YcgL domain-containing protein PP_4590 of Pseudomonas putida (strain ATCC 47054 / DSM 6125 / CFBP 8728 / NCIMB 11950 / KT2440).